Reading from the N-terminus, the 540-residue chain is Sesquiterpene synthase 15b (540 aa).

3 residues coordinate Mg(2+): Asp-292, Asp-296, and Glu-445. Residues 292–296 (DDIYD) carry the DDXXD motif motif.

It belongs to the terpene synthase family. Tpsa subfamily. Mg(2+) is required as a cofactor. The cofactor is Mn(2+).

It catalyses the reaction (2E,6E)-farnesyl diphosphate = germacrene A + diphosphate. The protein operates within secondary metabolite biosynthesis; terpenoid biosynthesis. Sesquiterpene synthase involved in the biosynthesis of volatile compounds. Mediates the conversion of (2E,6E)-farnesyl diphosphate (FPP) into germacrene A. The protein is Sesquiterpene synthase 15b of Solanum habrochaites (Wild tomato).